The chain runs to 753 residues: 5-methyltetrahydropteroyltriglutamate--homocysteine methyltransferase (753 aa).

5-methyltetrahydropteroyltri-L-glutamate is bound by residues 17–20 (RELK) and Lys117. Residues 431-433 (IGS) and Glu484 each bind L-homocysteine. L-methionine contacts are provided by residues 431-433 (IGS) and Glu484. Residues 515 to 516 (RC) and Trp561 contribute to the 5-methyltetrahydropteroyltri-L-glutamate site. Residue Asp599 participates in L-homocysteine binding. Asp599 contributes to the L-methionine binding site. A 5-methyltetrahydropteroyltri-L-glutamate-binding site is contributed by Glu605. Zn(2+) is bound by residues His641, Cys643, and Glu665. The active-site Proton donor is the His694. Cys726 contacts Zn(2+).

It belongs to the vitamin-B12 independent methionine synthase family. Requires Zn(2+) as cofactor.

The catalysed reaction is 5-methyltetrahydropteroyltri-L-glutamate + L-homocysteine = tetrahydropteroyltri-L-glutamate + L-methionine. The protein operates within amino-acid biosynthesis; L-methionine biosynthesis via de novo pathway; L-methionine from L-homocysteine (MetE route): step 1/1. Functionally, catalyzes the transfer of a methyl group from 5-methyltetrahydrofolate to homocysteine resulting in methionine formation. In Escherichia coli O6:H1 (strain CFT073 / ATCC 700928 / UPEC), this protein is 5-methyltetrahydropteroyltriglutamate--homocysteine methyltransferase.